We begin with the raw amino-acid sequence, 224 residues long: Holliday junction branch migration complex subunit RuvA (224 aa).

Residues 1–64 form a domain I region; the sequence is MIGKVAGILD…EDLLQLFGFP (64 aa). Residues 65–143 form a domain II region; sequence TMIEKEWHRL…ALMAMGGGTA (79 aa). Positions 141-185 are disordered; sequence GTAALAPSEPPEPEPGTSSGSRRKTRAPEPPRPSHTADALSALAN. Positions 144 to 170 are flexible linker; that stretch reads ALAPSEPPEPEPGTSSGSRRKTRAPEP. The segment at 171–224 is domain III; it reads PRPSHTADALSALANLGYQPTDAAQAVAQAAGESPDADTAALIRAALKLLAPKS.

The protein belongs to the RuvA family. As to quaternary structure, homotetramer. Forms an RuvA(8)-RuvB(12)-Holliday junction (HJ) complex. HJ DNA is sandwiched between 2 RuvA tetramers; dsDNA enters through RuvA and exits via RuvB. An RuvB hexamer assembles on each DNA strand where it exits the tetramer. Each RuvB hexamer is contacted by two RuvA subunits (via domain III) on 2 adjacent RuvB subunits; this complex drives branch migration. In the full resolvosome a probable DNA-RuvA(4)-RuvB(12)-RuvC(2) complex forms which resolves the HJ.

The protein localises to the cytoplasm. Its function is as follows. The RuvA-RuvB-RuvC complex processes Holliday junction (HJ) DNA during genetic recombination and DNA repair, while the RuvA-RuvB complex plays an important role in the rescue of blocked DNA replication forks via replication fork reversal (RFR). RuvA specifically binds to HJ cruciform DNA, conferring on it an open structure. The RuvB hexamer acts as an ATP-dependent pump, pulling dsDNA into and through the RuvAB complex. HJ branch migration allows RuvC to scan DNA until it finds its consensus sequence, where it cleaves and resolves the cruciform DNA. The protein is Holliday junction branch migration complex subunit RuvA of Cereibacter sphaeroides (strain ATCC 17029 / ATH 2.4.9) (Rhodobacter sphaeroides).